Reading from the N-terminus, the 110-residue chain is MEALKIFGIFTVTAVAEIVGCYLPYLWLRQGHSIWLLVPAAFSLAAFVWLLTLHPEAAGRTYAAYGGIYVSVALMWLWLVESTRPTMTDLLGVLICIIGMAVIMFGPRNV.

4 consecutive transmembrane segments (helical) span residues 6–26 (IFGIFTVTAVAEIVGCYLPYL), 33–53 (SIWLLVPAAFSLAAFVWLLTL), 61–81 (TYAAYGGIYVSVALMWLWLVE), and 87–107 (MTDLLGVLICIIGMAVIMFGP).

The protein belongs to the UPF0060 family.

It is found in the cell inner membrane. The sequence is that of UPF0060 membrane protein Ping_0587 from Psychromonas ingrahamii (strain DSM 17664 / CCUG 51855 / 37).